The sequence spans 559 residues: Poly [ADP-ribose] polymerase 2 (559 aa).

The tract at residues 1 to 58 (MAPRRQRSGSGRRVLNEAKKVDNGNKATEDDSPPGKKMRTCQRKGPMAGGKDADRTKD) is disordered. Residues 1–83 (MAPRRQRSGS…VDPECAAKLG (83 aa)) form an N-terminal region (NTR) region. Basic and acidic residues predominate over residues 14–29 (VLNEAKKVDNGNKATE). 2 consecutive short sequence motifs (nuclear localization signal) follow at residues 19–20 (KK) and 33–39 (PPGKKMR). N6-(ADP-ribosyl)lysine; alternate is present on residues lysine 36 and lysine 37. 2 positions are modified to N6-acetyllysine; alternate: lysine 36 and lysine 37. The WGR domain occupies 84 to 181 (KAHVYCEGDD…ENFEKVPGKY (98 aa)). A PARP alpha-helical domain is found at 207 to 324 (ESQLDLRVQE…DIEIALKLVK (118 aa)). Serine 208 is modified (phosphoserine). Positions 332-559 (HPLDQHYRNL…KIQFNFLQLW (228 aa)) constitute a PARP catalytic domain. NAD(+) contacts are provided by residues 404–406 (HGS), glycine 413, arginine 420, and serine 446. Glutamate 534 serves as the catalytic For poly [ADP-ribose] polymerase activity.

Belongs to the ARTD/PARP family. In terms of assembly, component of a base excision repair (BER) complex, containing at least XRCC1, PARP1, POLB and LRIG3. Homo- and heterodimer with PARP1. Interacts (via the PARP catalytic domain) with HPF1. Interacts with core nucleosomes. Auto poly-ADP-ribosylated on serine residues, leading to dissociation of the PARP2-HPF1 complex from chromatin. Poly-ADP-ribosylated by PARP1. In terms of processing, acetylation reduces DNA binding and enzymatic activity. Post-translationally, proteolytically cleaved by caspase-8 (CASP8) in response to apoptosis, leading to its inactivation. Widely expressed; the highest levels were in testis followed by ovary. Expression is correlated with proliferation, with higher levels occurring during early fetal development and organogenesis and in the highly proliferative cell compartments of adult.

The protein localises to the nucleus. It localises to the chromosome. It carries out the reaction NAD(+) + (ADP-D-ribosyl)n-acceptor = nicotinamide + (ADP-D-ribosyl)n+1-acceptor + H(+).. It catalyses the reaction L-seryl-[protein] + NAD(+) = O-(ADP-D-ribosyl)-L-seryl-[protein] + nicotinamide + H(+). The catalysed reaction is L-aspartyl-[protein] + NAD(+) = 4-O-(ADP-D-ribosyl)-L-aspartyl-[protein] + nicotinamide. The enzyme catalyses L-glutamyl-[protein] + NAD(+) = 5-O-(ADP-D-ribosyl)-L-glutamyl-[protein] + nicotinamide. ADP-ribosyltransferase activity is regulated via an allosteric activation mechanism. In absence of activation signal, PARP2 is autoinhibited by the PARP alpha-helical domain (also named HD region), which prevents effective NAD(+)-binding. Activity is highly stimulated by signals, which unfold the PARP alpha-helical domain, relieving autoinhibition. Poly-ADP-ribosyltransferase activity is tightly regulated and PARP2 is removed from damaged chromatin following initial poly-ADP-ribosylation of chromatin to avoid prolonged residence (trapping) that has cytotoxic consequences. CHD1L promotes PARP2 removal from chromatin. Functionally, poly-ADP-ribosyltransferase that mediates poly-ADP-ribosylation of proteins and plays a key role in DNA repair. Mediates glutamate, aspartate or serine ADP-ribosylation of proteins: the ADP-D-ribosyl group of NAD(+) is transferred to the acceptor carboxyl group of target residues and further ADP-ribosyl groups are transferred to the 2'-position of the terminal adenosine moiety, building up a polymer with an average chain length of 20-30 units. Serine ADP-ribosylation of proteins constitutes the primary form of ADP-ribosylation of proteins in response to DNA damage. Mediates glutamate and aspartate ADP-ribosylation of target proteins in absence of HPF1. Following interaction with HPF1, catalyzes serine ADP-ribosylation of target proteins; HPF1 conferring serine specificity by completing the PARP2 active site. PARP2 initiates the repair of double-strand DNA breaks: recognizes and binds DNA breaks within chromatin and recruits HPF1, licensing serine ADP-ribosylation of target proteins, such as histones, thereby promoting decompaction of chromatin and the recruitment of repair factors leading to the reparation of DNA strand breaks. HPF1 initiates serine ADP-ribosylation but restricts the polymerase activity of PARP2 in order to limit the length of poly-ADP-ribose chains. Specifically mediates formation of branched poly-ADP-ribosylation. Branched poly-ADP-ribose chains are specifically recognized by some factors, such as APLF. In addition to proteins, also able to ADP-ribosylate DNA: preferentially acts on 5'-terminal phosphates at DNA strand breaks termini in nicked duplex. The sequence is that of Poly [ADP-ribose] polymerase 2 (Parp2) from Mus musculus (Mouse).